The sequence spans 269 residues: Ribosomal RNA small subunit methyltransferase A (269 aa).

S-adenosyl-L-methionine-binding residues include histidine 12, leucine 14, glycine 39, glutamate 60, aspartate 81, and asparagine 103.

Belongs to the class I-like SAM-binding methyltransferase superfamily. rRNA adenine N(6)-methyltransferase family. RsmA subfamily.

It localises to the cytoplasm. It catalyses the reaction adenosine(1518)/adenosine(1519) in 16S rRNA + 4 S-adenosyl-L-methionine = N(6)-dimethyladenosine(1518)/N(6)-dimethyladenosine(1519) in 16S rRNA + 4 S-adenosyl-L-homocysteine + 4 H(+). Specifically dimethylates two adjacent adenosines (A1518 and A1519) in the loop of a conserved hairpin near the 3'-end of 16S rRNA in the 30S particle. May play a critical role in biogenesis of 30S subunits. The sequence is that of Ribosomal RNA small subunit methyltransferase A from Leptothrix cholodnii (strain ATCC 51168 / LMG 8142 / SP-6) (Leptothrix discophora (strain SP-6)).